A 286-amino-acid polypeptide reads, in one-letter code: NAD kinase (286 aa).

Asp74 serves as the catalytic Proton acceptor. NAD(+) is bound by residues 74 to 75, 148 to 149, Asp178, Ala186, 189 to 194, and Gln244; these read DG, ND, and TAYNLS.

This sequence belongs to the NAD kinase family. It depends on a divalent metal cation as a cofactor.

Its subcellular location is the cytoplasm. It catalyses the reaction NAD(+) + ATP = ADP + NADP(+) + H(+). In terms of biological role, involved in the regulation of the intracellular balance of NAD and NADP, and is a key enzyme in the biosynthesis of NADP. Catalyzes specifically the phosphorylation on 2'-hydroxyl of the adenosine moiety of NAD to yield NADP. The polypeptide is NAD kinase (Campylobacter jejuni subsp. doylei (strain ATCC BAA-1458 / RM4099 / 269.97)).